Consider the following 572-residue polypeptide: Acetyl-coenzyme A synthetase (572 aa).

A CoA-binding site is contributed by T260. ATP is bound by residues 333 to 335 (GEP), 354 to 359 (DTWWMT), D440, and R455. Residue S463 participates in CoA binding. R466 provides a ligand contact to ATP. The Mg(2+) site is built by V477, H479, and I482. Residue K524 coordinates CoA. The residue at position 549 (K549) is an N6-acetyllysine.

Belongs to the ATP-dependent AMP-binding enzyme family. In terms of assembly, interacts with FloT. The cofactor is Mg(2+). Acetylated. Deacetylation by the SIR2-homolog deacetylase activates the enzyme.

It localises to the cell membrane. The protein resides in the membrane raft. The catalysed reaction is acetate + ATP + CoA = acetyl-CoA + AMP + diphosphate. In terms of biological role, catalyzes the conversion of acetate into acetyl-CoA (AcCoA), an essential intermediate at the junction of anabolic and catabolic pathways. AcsA undergoes a two-step reaction. In the first half reaction, AcsA combines acetate with ATP to form acetyl-adenylate (AcAMP) intermediate. In the second half reaction, it can then transfer the acetyl group from AcAMP to the sulfhydryl group of CoA, forming the product AcCoA. Has a role in growth and sporulation on acetate. This is Acetyl-coenzyme A synthetase (acsA) from Bacillus subtilis (strain 168).